The sequence spans 315 residues: Probable NAD(P)H-dependent D-xylose reductase xyl1 (315 aa).

Residue tyrosine 50 is the Proton donor of the active site. Histidine 112 is a binding site for substrate. NAD(+) is bound by residues 166-167, 215-224, and 271-281; these read SN, SSFGPLSFVE, and KSNDPTRLAQN.

This sequence belongs to the aldo/keto reductase family.

The catalysed reaction is xylitol + NAD(+) = D-xylose + NADH + H(+). It carries out the reaction xylitol + NADP(+) = D-xylose + NADPH + H(+). The protein operates within carbohydrate metabolism; D-xylose degradation. Its function is as follows. Catalyzes the initial reaction in the xylose utilization pathway by reducing D-xylose into xylitol. Xylose is a major component of hemicelluloses such as xylan. Most fungi utilize D-xylose via three enzymatic reactions, xylose reductase (XR), xylitol dehydrogenase (XDH), and xylulokinase, to form xylulose 5-phosphate, which enters pentose phosphate pathway. The chain is Probable NAD(P)H-dependent D-xylose reductase xyl1 (xyl1) from Aspergillus fumigatus (strain ATCC MYA-4609 / CBS 101355 / FGSC A1100 / Af293) (Neosartorya fumigata).